The primary structure comprises 258 residues: Thiazole synthase (258 aa).

Lys-98 functions as the Schiff-base intermediate with DXP in the catalytic mechanism. Residues Gly-159, 185–186, and 207–208 each bind 1-deoxy-D-xylulose 5-phosphate; these read AG and NT.

This sequence belongs to the ThiG family. In terms of assembly, homotetramer. Forms heterodimers with either ThiH or ThiS.

The protein localises to the cytoplasm. The enzyme catalyses [ThiS sulfur-carrier protein]-C-terminal-Gly-aminoethanethioate + 2-iminoacetate + 1-deoxy-D-xylulose 5-phosphate = [ThiS sulfur-carrier protein]-C-terminal Gly-Gly + 2-[(2R,5Z)-2-carboxy-4-methylthiazol-5(2H)-ylidene]ethyl phosphate + 2 H2O + H(+). It participates in cofactor biosynthesis; thiamine diphosphate biosynthesis. Catalyzes the rearrangement of 1-deoxy-D-xylulose 5-phosphate (DXP) to produce the thiazole phosphate moiety of thiamine. Sulfur is provided by the thiocarboxylate moiety of the carrier protein ThiS. In vitro, sulfur can be provided by H(2)S. The polypeptide is Thiazole synthase (Bacillus thuringiensis subsp. konkukian (strain 97-27)).